Reading from the N-terminus, the 2213-residue chain is Sortilin-related receptor (2213 aa).

A signal peptide spans 1–28 (MATRSSRRESRLPFLFTLVALLPPGALC). A propeptide spans 29–81 (EVWTRTLHGGRAPLPQERGFRVVQGDPRELRLWERGDARGASRADEKPLRRRR) (removed in mature form). The Cell attachment site motif lies at 63 to 65 (RGD). Residues 82-2136 (SAALQPEPIK…MQAARSTDVA (2055 aa)) are Lumenal-facing. Residue Asn-99 is glycosylated (N-linked (GlcNAc...) asparagine). The residue at position 114 (Ser-114) is a Phosphoserine. The stretch at 136 to 147 (YVSYDYGKSFNK) is one BNR 1 repeat. The N-linked (GlcNAc...) asparagine glycan is linked to Asn-158. Residues 232 to 243 (WKSDDFGQTWIM) form a BNR 2 repeat. 2 N-linked (GlcNAc...) asparagine glycosylation sites follow: Asn-368 and Asn-430. BNR repeat units follow at residues 441-452 (VITFDKGGTWEF), 521-532 (YISSSAGARWRE), and 562-573 (KYSTNEGETWKA). N-linked (GlcNAc...) asparagine glycans are attached at residues Asn-616, Asn-674, Asn-817, and Asn-870. LDL-receptor class B repeat units follow at residues 799-842 (NCLY…EPLS), 843-886 (QLLY…VPQE), 887-929 (GIMF…SVDD), 930-971 (QWIY…FKNE), and 972-1012 (IYWD…FYKG). Positions 1025–1071 (CSLLCLPRANNSKSCRCPDGVASSVLPSGDLMCDCPKGYELKNNTCV) constitute an EGF-like domain. N-linked (GlcNAc...) asparagine glycans are attached at residues Asn-1034 and Asn-1067. LDL-receptor class A domains lie at 1075–1113 (DTCLRNQYRCSNGNCINSIWWCDFDNDCGDMSDEKNCPT), 1114–1154 (TICD…HCEM), 1155–1193 (HQCRSDEYNCSSGMCIRSSWVCDGDNDCRDWSDEANCTA), 1196–1235 (HTCEASNFQCRNGHCIPQRWACDGDADCQDGSDEDPANCE), 1237–1271 (KCNGFRCPNGTCIPSTKHCDGLHDCSDGSDEQHCE), 1272–1316 (PLCT…GCSR), 1322–1360 (KVCDEFGFQCQNGVCISLIWKCDGMDDCGDYSDEANCEN), 1365–1404 (PNCSRYFQFRCDNGHCIPNRWKCDRENDCGDWSDEKDCGD), and 1416–1454 (STCLPNYYRCGGGACVIDTWVCDGYRDCADGSDEEACPS). 21 cysteine pairs are disulfide-bonded: Cys-1077-Cys-1089, Cys-1084-Cys-1102, Cys-1096-Cys-1111, Cys-1116-Cys-1130, Cys-1124-Cys-1143, Cys-1137-Cys-1152, Cys-1157-Cys-1169, Cys-1164-Cys-1182, Cys-1176-Cys-1191, Cys-1198-Cys-1210, Cys-1205-Cys-1223, Cys-1217-Cys-1234, Cys-1238-Cys-1248, Cys-1243-Cys-1261, Cys-1255-Cys-1270, Cys-1274-Cys-1288, Cys-1282-Cys-1301, Cys-1295-Cys-1314, Cys-1324-Cys-1336, Cys-1331-Cys-1349, and Cys-1343-Cys-1358. Residue Asn-1163 is glycosylated (N-linked (GlcNAc...) asparagine). N-linked (GlcNAc...) asparagine glycosylation occurs at Asn-1190. The N-linked (GlcNAc...) asparagine glycan is linked to Asn-1245. An N-linked (GlcNAc...) asparagine glycan is attached at Asn-1366. 6 disulfides stabilise this stretch: Cys-1367/Cys-1380, Cys-1375/Cys-1393, Cys-1387/Cys-1402, Cys-1418/Cys-1430, Cys-1425/Cys-1443, and Cys-1437/Cys-1452. A glycan (N-linked (GlcNAc...) asparagine) is linked at Asn-1457. 2 LDL-receptor class A domains span residues 1468–1507 (GRCDRFEFECHQPKKCIPNWRRCDGHQDCQDGQDEANCPT) and 1511–1550 (LTCMSWEFKCEDGEACIVLSERCDGFLDCSDESDEKACSD). Intrachain disulfides connect Cys-1470-Cys-1483, Cys-1477-Cys-1496, Cys-1490-Cys-1505, Cys-1513-Cys-1526, Cys-1520-Cys-1539, and Cys-1533-Cys-1548. Fibronectin type-III domains are found at residues 1556-1648 (KVQN…TPEG), 1652-1744 (APQN…TVKG), 1748-1843 (PPPN…VRPP), 1842-1926 (PPAP…VVKM), 1933-2028 (PPRH…APDA), and 2029-2117 (LKII…LYDE). 13 N-linked (GlcNAc...) asparagine glycosylation sites follow: Asn-1569, Asn-1607, Asn-1705, Asn-1732, Asn-1808, Asn-1853, Asn-1893, Asn-1985, Asn-2009, Asn-2053, Asn-2068, Asn-2075, and Asn-2091. The helical transmembrane segment at 2137 to 2157 (AVVVPILFLILLSLGVGFAIL) threads the bilayer. The Cytoplasmic portion of the chain corresponds to 2158 to 2213 (YTKHRRLQSSFTAFANSHYSSRLGSAIFSSGDDLGEDDEDAPMITGFSDDVPMVIA). A Potential nuclear localization signal for the C-terminal fragment generated by PSEN1 motif is present at residues 2160 to 2163 (KHRR). Positions 2171–2176 (FANSHY) match the Endocytosis signal motif. Residues 2189 to 2213 (DDLGEDDEDAPMITGFSDDVPMVIA) are required for efficient Golgi apparatus - endosome sorting. The required for interaction with GGA1 and GGA2 stretch occupies residues 2200–2213 (MITGFSDDVPMVIA). Ser-2205 is subject to Phosphoserine; by ROCK2. The short motif at 2207–2211 (DVPMV) is the DXXLL motif involved in the interaction with GGA1 element.

The protein belongs to the VPS10-related sortilin family. SORL1 subfamily. In terms of assembly, after maturation cleavage, interacts (via N-terminus) with its own propeptide; this interaction prevents interaction with other ligands, including CRLF1, GDNF, GFRA1, IL6 and IL6R. Interacts (via N-terminal ectodomain) with APP, forming a 1:1 stoichiometric complex; this interaction retains APP in the trans-Golgi network and reduces processing into soluble APP-alpha and amyloid-beta peptides. Also interacts with APP C-terminal fragment C99 and with Abeta40. Interacts with beta-secretase BACE1/BACE; this interaction may affect BACE1-binding to APP and hence reduce BACE1-dependent APP cleavage. Interacts with LRPAP1/RAP. Interacts (via C-terminal cytosolic domain) with GGA1 and GGA2 (via N-terminal VHS domain). Interacts with PACS1. May interact (via the N-terminal ectodomain) with the morphogenetic neuropeptide, also called head activator or HA; this interaction is impaired in the presence of propeptide. Interacts with neurotensin/NTS. Interacts (via the N-terminal ectodomain) with PDGFB homodimer. Interacts (via N-terminal ectodomain) with the uPA receptor PLAUR. Interacts with uPA/PLAU and PAI1/SERPINE1, either individually or in complex with each other, leading to endocytosis. Also interacts with PAI1/SERPINE1 in complex with tPA/PLAT. Interacts (via C-terminus) with AP-1 and AP-2 complexes. Interacts with BMPR1A and BMPR1B. Interacts with lipoprotein lipase LPL; this interaction is optimal in slightly acidic conditions. Interacts (via N-terminal ectodomain) with GDNF (via propeptide) and GDNF receptor alpha-1/GFRA1, either individually or in complex with each other. The interaction with GDNF occurs mostly intracellularly. Also interacts with other GDNF receptor alpha family members, including GFRA2, GFRA3 and GFRA4. Interacts with the insulin receptor INSR; this interaction strongly increases the surface exposure of INSR. Interacts (via cytosolic C-terminus) with STK39/SPAK. Interacts (via N-terminal ectodomain) with the heterodimeric complex CRLF1-CLC; within this complex, the interaction is mediated predominantly by the CRLF1 moiety. Interacts with CNTFR, as well as with the tripartite signaling complex formed by CRLF1, CLC and CNTFR. Interacts (via N-terminal ectodomain) with IL6; this interaction leads to IL6 internalization and lysosomal degradation. Binding of SOLRL1 secreted N-terminal ectodomain to IL6 may increase IL6 trans signaling. Interacts with secreted IL6R; this interaction leads to IL6R internalization. Also interacts with transmembrane IL6R; this interaction does not affect subcellular location. Interacts with APOE. Interacts with apolipoprotein E-rich beta-VLDL. Interacts with APOA5; this interaction leads to APOA5 internalization and is abolished by heparin. Interaction with APOA5 results in enhanced binding to chylomicrons. Interacts with ROCK2. Interacts (via cytosolic C-terminus) with PPP3CB/calcineurin A beta. Interacts with NTRK2/TRKB; this interaction facilitates NTRK2 trafficking between synaptic plasma membranes, postsynaptic densities and cell soma, hence positively regulates BDNF signaling. Interacts (via cytosolic C-terminus) with HSPA12A in an ADP-dependent manner; this interaction affects SORL1 internalization and subcellular localization. Interacts (via N-terminal ectodomain) with ERBB2/HER2. Within the Golgi apparatus, the propeptide may be cleaved off by FURIN or a furin-like protease. After cleavage, the propeptide interacts with the mature protein N-terminus, preventing the association with other ligands. At the cell surface, partially subjected to proteolytic shedding that releases the ectodomain in the extracellular milieu. The shedding may be catalyzed by ADAM17/TACE. Following shedding, PSEN1/presenilin-1 cleaves the remaining transmembrane fragment and catalyzes the release of a C-terminal fragment in the cytosol and of a soluble N-terminal beta fragment in the extracellular milieu. The C-terminal cytosolic fragment localizes to the nucleus. In terms of processing, phosphorylation at Ser-2205 facilitates the interaction with GGA1. In terms of tissue distribution, expressed in brain, in particular the hippocampus, dentate gyrus, and cerebral cortex (at protein level). Also detected in liver, adrenal glands, pancreas and testis. Expressed in smooth muscle cells, predominantly during proliferation.

It localises to the golgi apparatus membrane. It is found in the golgi apparatus. The protein resides in the trans-Golgi network membrane. Its subcellular location is the endosome membrane. The protein localises to the early endosome membrane. It localises to the recycling endosome membrane. It is found in the endoplasmic reticulum membrane. The protein resides in the endosome. Its subcellular location is the multivesicular body membrane. The protein localises to the cell membrane. It localises to the cytoplasmic vesicle. It is found in the secretory vesicle membrane. The protein resides in the secreted. Functionally, sorting receptor that directs several proteins to their correct location within the cell. Along with AP-1 complex, involved Golgi apparatus - endosome sorting. Sorting receptor for APP, regulating its intracellular trafficking and processing into amyloidogenic-beta peptides. Retains APP in the trans-Golgi network, hence preventing its transit through late endosomes where amyloid beta peptides Abeta40 and Abeta42 are generated. May also sort newly produced amyloid-beta peptides to lysosomes for catabolism. Does not affect APP trafficking from the endoplasmic reticulum to Golgi compartments. Sorting receptor for the BDNF receptor NTRK2/TRKB that facilitates NTRK2 trafficking between synaptic plasma membranes, postsynaptic densities and cell soma, hence positively regulates BDNF signaling by controlling the intracellular location of its receptor. Sorting receptor for GDNF that promotes GDNF regulated, but not constitutive secretion. Sorting receptor for the GDNF-GFRA1 complex, directing it from the cell surface to endosomes. GDNF is then targeted to lysosomes and degraded, while its receptor GFRA1 recycles back to the cell membrane, resulting in a GDNF clearance pathway. The SORL1-GFRA1 complex further targets RET for endocytosis, but not for degradation, affecting GDNF-induced neurotrophic activities. Sorting receptor for ERBB2/HER2. Regulates ERBB2 subcellular distribution by promoting its recycling after internalization from endosomes back to the plasma membrane, hence stimulating phosphoinositide 3-kinase (PI3K)-dependent ERBB2 signaling. Sorting receptor for lipoprotein lipase LPL. Promotes LPL localization to endosomes and later to the lysosomes, leading to degradation of newly synthesized LPL. Potential sorting receptor for APOA5, inducing APOA5 internalization to early endosomes, then to late endosomes, wherefrom a portion is sent to lysosomes and degradation, another portion is sorted to the trans-Golgi network. Sorting receptor for the insulin receptor INSR. Promotes recycling of internalized INSR via the Golgi apparatus back to the cell surface, thereby preventing lysosomal INSR catabolism, increasing INSR cell surface expression and strengthening insulin signal reception in adipose tissue. Does not affect INSR internalization. Plays a role in renal ion homeostasis, controlling the phospho-regulation of SLC12A1/NKCC2 by STK39/SPAK kinase and PPP3CB/calcineurin A beta phosphatase, possibly through intracellular sorting of STK39 and PPP3CB. Stimulates, via the N-terminal ectodomain, the proliferation and migration of smooth muscle cells, possibly by increasing cell surface expression of the urokinase receptor uPAR/PLAUR. This may promote extracellular matrix proteolysis and hence facilitate cell migration. By acting on the migration of intimal smooth muscle cells, may accelerate intimal thickening following vascular injury. Promotes adhesion of monocytes. Stimulates proliferation and migration of monocytes/macrophages. Through its action on intimal smooth muscle cells and macrophages, may accelerate intimal thickening and macrophage foam cell formation in the process of atherosclerosis. Regulates hypoxia-enhanced adhesion of hematopoietic stem and progenitor cells to the bone marrow stromal cells via a PLAUR-mediated pathway. This function is mediated by the N-terminal ectodomain. Metabolic regulator, which functions to maintain the adequate balance between lipid storage and oxidation in response to changing environmental conditions, such as temperature and diet. The N-terminal ectodomain negatively regulates adipose tissue energy expenditure, acting through the inhibition the BMP/Smad pathway. May regulate signaling by the heterodimeric neurotrophic cytokine CLCF1-CRLF1 bound to the CNTFR receptor by promoting the endocytosis of the tripartite complex CLCF1-CRLF1-CNTFR and lysosomal degradation. May regulate IL6 signaling, decreasing cis signaling, possibly by interfering with IL6-binding to membrane-bound IL6R, while up-regulating trans signaling via soluble IL6R. The protein is Sortilin-related receptor (SORL1) of Oryctolagus cuniculus (Rabbit).